Reading from the N-terminus, the 175-residue chain is B9 domain-containing protein 2 (175 aa).

The 117-residue stretch at 2–118 folds into the C2 B9-type domain; the sequence is AEVHVIGQII…ACPTWRPLGS (117 aa).

It belongs to the B9D family. Part of the tectonic-like complex (also named B9 complex). Interacts with TUBG1.

The protein resides in the cytoplasm. The protein localises to the cytoskeleton. It localises to the cilium basal body. It is found in the cilium axoneme. Its subcellular location is the nucleus. Its function is as follows. Component of the tectonic-like complex, a complex localized at the transition zone of primary cilia and acting as a barrier that prevents diffusion of transmembrane proteins between the cilia and plasma membranes. This is B9 domain-containing protein 2 (B9D2) from Homo sapiens (Human).